The sequence spans 140 residues: Nucleoside diphosphate kinase (140 aa).

Residues lysine 11, phenylalanine 59, arginine 87, threonine 93, arginine 104, and asparagine 114 each coordinate ATP. The active-site Pros-phosphohistidine intermediate is the histidine 117.

The protein belongs to the NDK family. As to quaternary structure, homotetramer. The cofactor is Mg(2+).

It localises to the cytoplasm. It carries out the reaction a 2'-deoxyribonucleoside 5'-diphosphate + ATP = a 2'-deoxyribonucleoside 5'-triphosphate + ADP. It catalyses the reaction a ribonucleoside 5'-diphosphate + ATP = a ribonucleoside 5'-triphosphate + ADP. Functionally, major role in the synthesis of nucleoside triphosphates other than ATP. The ATP gamma phosphate is transferred to the NDP beta phosphate via a ping-pong mechanism, using a phosphorylated active-site intermediate. The chain is Nucleoside diphosphate kinase from Rhizobium rhizogenes (strain K84 / ATCC BAA-868) (Agrobacterium radiobacter).